The sequence spans 380 residues: GPI-anchor transamidase (380 aa).

A signal peptide spans 1–19 (MIVQFVALLLLNLLQIIAA). Residues 20–354 (ESSHTNNWAV…TRELKYKKHP (335 aa)) are Lumenal-facing. Active-site residues include histidine 145 and cysteine 187. Asparagine 307 carries an N-linked (GlcNAc...) asparagine glycan. A helical transmembrane segment spans residues 355–375 (ISRIISAVVCISFSIGFPYYA). Over 376–380 (SKYLK) the chain is Cytoplasmic.

This sequence belongs to the peptidase C13 family. Forms a complex with PIG-T homolog, PIG-U homolog and PIG-S homolog. Post-translationally, the disulfide bond between PIGK/GPI8 and PIGT is important for normal enzyme activity.

It localises to the endoplasmic reticulum membrane. Its pathway is glycolipid biosynthesis; glycosylphosphatidylinositol-anchor biosynthesis. In terms of biological role, mediates GPI anchoring in the endoplasmic reticulum, by replacing a protein's C-terminal GPI attachment signal peptide with a pre-assembled GPI. During this transamidation reaction, the GPI transamidase forms a carbonyl intermediate with the substrate protein. The sequence is that of GPI-anchor transamidase (gpi8) from Schizosaccharomyces pombe (strain 972 / ATCC 24843) (Fission yeast).